The following is a 201-amino-acid chain: ATP-dependent Clp protease proteolytic subunit (201 aa).

Ser101 (nucleophile) is an active-site residue. Residue His126 is part of the active site.

Belongs to the peptidase S14 family. Component of the chloroplastic Clp protease core complex.

It is found in the plastid. Its subcellular location is the chloroplast stroma. It carries out the reaction Hydrolysis of proteins to small peptides in the presence of ATP and magnesium. alpha-casein is the usual test substrate. In the absence of ATP, only oligopeptides shorter than five residues are hydrolyzed (such as succinyl-Leu-Tyr-|-NHMec, and Leu-Tyr-Leu-|-Tyr-Trp, in which cleavage of the -Tyr-|-Leu- and -Tyr-|-Trp bonds also occurs).. In terms of biological role, cleaves peptides in various proteins in a process that requires ATP hydrolysis. Has a chymotrypsin-like activity. Plays a major role in the degradation of misfolded proteins. This is ATP-dependent Clp protease proteolytic subunit from Chlorella vulgaris (Green alga).